Here is a 382-residue protein sequence, read N- to C-terminus: 6-hydroxynicotinate 3-monooxygenase (382 aa).

Positions 1–25 (MRGRQKIAIVGAGLGGAAAATLLQQ) are cleaved as a signal peptide. FAD contacts are provided by residues G15, 34-35 (EQ), H47, R108, and L130. The active-site Proton acceptor is the H47. Catalysis depends on Y215, which acts as the Proton acceptor. Residues D294 and 307-308 (AC) contribute to the FAD site.

This sequence belongs to the 6-hydroxynicotinate 3-monooxygenase family. Monomer. FAD serves as cofactor.

The enzyme catalyses 6-hydroxynicotinate + NADH + O2 + 2 H(+) = 2,5-dihydroxypyridine + CO2 + NAD(+) + H2O. It participates in cofactor degradation; nicotinate degradation. Flavin-dependent monooxygenase (FMO) that catalyzes the decarboxylative hydroxylation of 6-hydroxynicotinic acid (6-HNA) to 2,5-dihydroxypyridine (2,5-DHP) with concomitant oxidation of NADH, a step in the aerobic nicotinate degradation pathway. In Pseudomonas putida (strain ATCC 47054 / DSM 6125 / CFBP 8728 / NCIMB 11950 / KT2440), this protein is 6-hydroxynicotinate 3-monooxygenase.